The chain runs to 552 residues: Membrane protein insertase YidC (552 aa).

Residues 3–23 (IKRTVLWVIFFMSAVMLFDNW) traverse the membrane as a helical segment. The tract at residues 35–59 (PSATPTKTVGSAAPGTTTPGTQPAD) is disordered. Residues 42–59 (TVGSAAPGTTTPGTQPAD) show a composition bias toward low complexity. Transmembrane regions (helical) follow at residues 364-384 (WGWS…PLSA), 430-450 (FGGC…YWVL), and 504-524 (MMFM…GLVL).

The protein belongs to the OXA1/ALB3/YidC family. Type 1 subfamily. As to quaternary structure, interacts with the Sec translocase complex via SecD. Specifically interacts with transmembrane segments of nascent integral membrane proteins during membrane integration.

The protein localises to the cell inner membrane. In terms of biological role, required for the insertion and/or proper folding and/or complex formation of integral membrane proteins into the membrane. Involved in integration of membrane proteins that insert both dependently and independently of the Sec translocase complex, as well as at least some lipoproteins. Aids folding of multispanning membrane proteins. This chain is Membrane protein insertase YidC, found in Paraburkholderia phytofirmans (strain DSM 17436 / LMG 22146 / PsJN) (Burkholderia phytofirmans).